Reading from the N-terminus, the 248-residue chain is ATP synthase delta chain, chloroplastic (248 aa).

A chloroplast-targeting transit peptide spans 1–60 (MAALQQTPITFQSRSPPPTQIISGPTAKLSFSGGLKLPKLTIKLRSNRTSRRGGGAAGSK).

It belongs to the ATPase delta chain family. As to quaternary structure, F-type ATPases have 2 components, CF(1) - the catalytic core - and CF(0) - the membrane proton channel. CF(1) has five subunits: alpha(3), beta(3), gamma(1), delta(1), epsilon(1). CF(0) has three main subunits: a, b and c.

The protein localises to the plastid. The protein resides in the chloroplast thylakoid membrane. Functionally, this protein seems to be part of the stalk that links CF(0) to CF(1). It either transmits conformational changes from CF(0) into CF(1) or is implicated in proton conduction. In Nicotiana tabacum (Common tobacco), this protein is ATP synthase delta chain, chloroplastic (ATPD).